The chain runs to 120 residues: Large ribosomal subunit protein bL20c (120 aa).

Belongs to the bacterial ribosomal protein bL20 family.

It localises to the plastid. Binds directly to 23S ribosomal RNA and is necessary for the in vitro assembly process of the 50S ribosomal subunit. It is not involved in the protein synthesizing functions of that subunit. The sequence is that of Large ribosomal subunit protein bL20c from Cuscuta obtusiflora (Peruvian dodder).